A 166-amino-acid polypeptide reads, in one-letter code: NAD(P)H-quinone oxidoreductase subunit I, chloroplastic (166 aa).

2 consecutive 4Fe-4S ferredoxin-type domains span residues 55–84 and 95–124; these read GRIH…VDWK and LNYS…MTEE. [4Fe-4S] cluster contacts are provided by Cys64, Cys67, Cys70, Cys74, Cys104, Cys107, Cys110, and Cys114.

This sequence belongs to the complex I 23 kDa subunit family. In terms of assembly, NDH is composed of at least 16 different subunits, 5 of which are encoded in the nucleus. Requires [4Fe-4S] cluster as cofactor.

The protein localises to the plastid. The protein resides in the chloroplast thylakoid membrane. It carries out the reaction a plastoquinone + NADH + (n+1) H(+)(in) = a plastoquinol + NAD(+) + n H(+)(out). It catalyses the reaction a plastoquinone + NADPH + (n+1) H(+)(in) = a plastoquinol + NADP(+) + n H(+)(out). In terms of biological role, NDH shuttles electrons from NAD(P)H:plastoquinone, via FMN and iron-sulfur (Fe-S) centers, to quinones in the photosynthetic chain and possibly in a chloroplast respiratory chain. The immediate electron acceptor for the enzyme in this species is believed to be plastoquinone. Couples the redox reaction to proton translocation, and thus conserves the redox energy in a proton gradient. The polypeptide is NAD(P)H-quinone oxidoreductase subunit I, chloroplastic (Hofmeisteria fasciculata (Helogyne fasciculata)).